The sequence spans 2098 residues: 1-phosphatidylinositol 3-phosphate 5-kinase (2098 aa).

Residues 1–45 (MATDDKTSPTLDSANDLPRSPTSPSHLTHFKPLTPDQDEPPFKSA) are disordered. Ala-2 is modified (N-acetylalanine). Phosphoserine; by autocatalysis is present on residues Ser-23 and Ser-48. The disordered stretch occupies residues 57–123 (KERAEGGQGE…EPTFGGHDPR (67 aa)). A compositionally biased stretch (polar residues) spans 66-88 (EQQPLSGSWTSPQLPSRTQSVRS). At Ser-88 the chain carries Phosphoserine. The segment at 158-218 (DSQCKECYDC…ACTYCRKIAL (61 aa)) adopts an FYVE-type zinc-finger fold. Zn(2+) contacts are provided by Cys-164, Cys-167, Cys-180, Cys-183, Cys-188, Cys-191, Cys-210, and Cys-213. A disordered region spans residues 292-329 (VQEDAGKSPARNRSASITNLSLDRSGSPMVPSYETSVS). Phosphoserine is present on residues Ser-299, Ser-307, and Ser-312. A compositionally biased stretch (polar residues) spans 302–315 (RNRSASITNLSLDR). Ser-318 bears the Phosphoserine; by PKB/AKT1 or PKB/AKT2 mark. Ser-329 bears the Phosphoserine mark. Positions 365 to 440 (HSSGMEFQDH…DEYALYRPLQ (76 aa)) constitute a DEP domain. Positions 442–459 (TEFSETPSPDSDSVNSVE) are enriched in polar residues. Residues 442 to 469 (TEFSETPSPDSDSVNSVEGHSEPSWFKD) are disordered. The segment covering 460–469 (GHSEPSWFKD) has biased composition (basic and acidic residues). Ser-475 carries the post-translational modification Phosphoserine. The interval 484 to 505 (GDDNLANSASPSKRTSVSSFQS) is disordered. Residues 488-505 (LANSASPSKRTSVSSFQS) are compositionally biased toward polar residues. Residues 616 to 868 (MMALLQQLLH…MICVAYHSQL (253 aa)) form a chaperonin-like domain region. Disordered stretches follow at residues 1161 to 1191 (RIQP…NEGD) and 1512 to 1616 (FQQE…STDS). Residues 1177-1186 (SSTSSGQSGS) show a composition bias toward low complexity. Ser-1522 carries the post-translational modification Phosphoserine; by autocatalysis. 2 positions are modified to phosphoserine: Ser-1544 and Ser-1549. Residues 1562-1578 (LTTLSSQSSTSSTHLQL) show a composition bias toward low complexity. Position 1669 is a phosphoserine; by autocatalysis (Ser-1669). The disordered stretch occupies residues 1692–1799 (QWNSAEEGLP…PQDEVDGGDT (108 aa)). The segment covering 1704–1714 (STSDSRPKSSS) has biased composition (low complexity). Positions 1723 to 1735 (GGQTNRTTETEPQ) are enriched in polar residues. The residue at position 1754 (Ser-1754) is a Phosphoserine. In terms of domain architecture, PIPK spans 1758-2084 (SSQKRETLRG…RFCEAMDKYF (327 aa)). Positions 1842–2098 (EEDFIRSLSH…DHWTGLGLNC (257 aa)) are catalytic. 2 positions are modified to phosphoserine; by autocatalysis: Ser-1969 and Ser-2053.

Component of the PI(3,5)P2 regulatory complex/PAS complex, at least composed of PIKFYVE, FIG4 and VAC14. VAC14 nucleates the assembly of the complex and serves as a scaffold by pentamerizing into a star-shaped structure, which can bind a single copy each of PIKFYVE and FIG4 and coordinates their activities. Interacts (via chaperonin-like domain) with RABEPK; the interaction recruits RABEPK to the endosomal membrane. Interacts with SPAG9. Interacts with EGFR. Autophosphorylates which inhibits its own phosphatidylinositol 3-phosphate 5-kinase activity, stimulates FIG4 lipid phosphatase activity and down-regulates lipid product formation. Dephosphorylated by FIG4 in the PI(3,5)P2 regulatory complex, at Ser-48, Ser-1669 and Ser-2053. Phosphorylated in response to insulin at Ser-318 in a protein kinase B (PKB)-dependent manner.

Its subcellular location is the endosome membrane. The protein localises to the early endosome membrane. It is found in the cytoplasmic vesicle. It localises to the phagosome membrane. The protein resides in the late endosome membrane. It carries out the reaction a 1,2-diacyl-sn-glycero-3-phospho-(1D-myo-inositol-3-phosphate) + ATP = a 1,2-diacyl-sn-glycero-3-phospho-(1D-myo-inositol-3,5-bisphosphate) + ADP + H(+). The enzyme catalyses a 1,2-diacyl-sn-glycero-3-phospho-(1D-myo-inositol) + ATP = a 1,2-diacyl-sn-glycero-3-phospho-(1D-myo-inositol-5-phosphate) + ADP + H(+). It catalyses the reaction L-seryl-[protein] + ATP = O-phospho-L-seryl-[protein] + ADP + H(+). With respect to regulation, inhibited by apilimod and YM201636. Dual specificity kinase implicated in myriad essential cellular processes such as maintenance of endomembrane homeostasis, and endocytic-vacuolar pathway, lysosomal trafficking, nuclear transport, stress- or hormone-induced signaling and cell cycle progression. The PI(3,5)P2 regulatory complex regulates both the synthesis and turnover of phosphatidylinositol 3,5-bisphosphate (PtdIns(3,5)P2). Sole enzyme to catalyze the phosphorylation of phosphatidylinositol 3-phosphate on the fifth hydroxyl of the myo-inositol ring, to form (PtdIns(3,5)P2). Also catalyzes the phosphorylation of phosphatidylinositol on the fifth hydroxyl of the myo-inositol ring, to form phosphatidylinositol 5-phosphate (PtdIns(5)P). Has serine-protein kinase activity and is able to autophosphorylate and transphosphorylate. Autophosphorylation inhibits its own phosphatidylinositol 3-phosphate 5-kinase activity, stimulates FIG4 lipid phosphatase activity and down-regulates lipid product formation. Involved in key endosome operations such as fission and fusion in the course of endosomal cargo transport. Required for the maturation of early into late endosomes, phagosomes and lysosomes. Regulates vacuole maturation and nutrient recovery following engulfment of macromolecules, initiates the redistribution of accumulated lysosomal contents back into the endosome network. Critical regulator of the morphology, degradative activity, and protein turnover of the endolysosomal system in macrophages and platelets. In neutrophils, critical to perform chemotaxis, generate ROS, and undertake phagosome fusion with lysosomes. Plays a key role in the processing and presentation of antigens by major histocompatibility complex class II (MHC class II) mediated by CTSS. Regulates melanosome biogenesis by controlling the delivery of proteins from the endosomal compartment to the melanosome. Essential for systemic glucose homeostasis, mediates insulin-induced signals for endosome/actin remodeling in the course of GLUT4 translocation/glucose uptake activation. Supports microtubule-based endosome-to-trans-Golgi network cargo transport, through association with SPAG9 and RABEPK. Mediates EGFR trafficking to the nucleus. Functionally, (Microbial infection) Required for cell entry of coronaviruses SARS-CoV and SARS-CoV-2, as well as human coronavirus EMC (HCoV-EMC) by endocytosis. The polypeptide is 1-phosphatidylinositol 3-phosphate 5-kinase (Homo sapiens (Human)).